The sequence spans 373 residues: Leucine aminopeptidase 1 (373 aa).

A signal peptide spans 1–18 (MKFISVLALGATATSVLG). Positions 176 and 195 each coordinate Zn(2+). N-linked (GlcNAc...) asparagine glycosylation is present at Asn-196. Glu-234 and Asp-261 together coordinate Zn(2+). Asn-286 carries N-linked (GlcNAc...) asparagine glycosylation. Cys-310 and Cys-314 are joined by a disulfide. His-343 lines the Zn(2+) pocket.

The protein belongs to the peptidase M28 family. M28E subfamily. Monomer. Requires Zn(2+) as cofactor.

It is found in the secreted. Its function is as follows. Extracellular aminopeptidase which contributes to pathogenicity. The chain is Leucine aminopeptidase 1 (LAP1) from Arthroderma otae (strain ATCC MYA-4605 / CBS 113480) (Microsporum canis).